A 610-amino-acid chain; its full sequence is UvrABC system protein C (610 aa).

The region spanning 16–94 (SQPGVYRMYD…IKLYQPRYNV (79 aa)) is the GIY-YIG domain. The region spanning 204-239 (DQVLTQLISRMETASQNLEFEEAARIRDQIQAVRRV) is the UVR domain.

This sequence belongs to the UvrC family. In terms of assembly, interacts with UvrB in an incision complex.

The protein resides in the cytoplasm. Functionally, the UvrABC repair system catalyzes the recognition and processing of DNA lesions. UvrC both incises the 5' and 3' sides of the lesion. The N-terminal half is responsible for the 3' incision and the C-terminal half is responsible for the 5' incision. The protein is UvrABC system protein C of Escherichia coli O45:K1 (strain S88 / ExPEC).